Here is a 145-residue protein sequence, read N- to C-terminus: Large ribosomal subunit protein uL11 (145 aa).

Belongs to the universal ribosomal protein uL11 family. In terms of assembly, part of the ribosomal stalk of the 50S ribosomal subunit. Interacts with L10 and the large rRNA to form the base of the stalk. L10 forms an elongated spine to which L12 dimers bind in a sequential fashion forming a multimeric L10(L12)X complex. Post-translationally, one or more lysine residues are methylated.

In terms of biological role, forms part of the ribosomal stalk which helps the ribosome interact with GTP-bound translation factors. In Francisella philomiragia subsp. philomiragia (strain ATCC 25017 / CCUG 19701 / FSC 153 / O#319-036), this protein is Large ribosomal subunit protein uL11.